The primary structure comprises 1023 residues: 1-phosphatidylinositol 4,5-bisphosphate phosphodiesterase beta-4 (1023 aa).

Residues Gln149–Gln299 form the PI-PLC X-box domain. Catalysis depends on residues His164 and His211. The region spanning Leu413–Arg529 is the PI-PLC Y-box domain. A C2 domain is found at Asp532–Leu657. 2 disordered regions span residues Ala711 to Arg742 and Lys930 to Leu958. 2 stretches are compositionally biased toward polar residues: residues Ala729–Arg742 and Met933–Asp942. Thr734 bears the Phosphothreonine mark. Residues Lys943–Glu957 show a composition bias toward basic and acidic residues.

Ca(2+) serves as cofactor. Post-translationally, the N-terminus is blocked. Preferentially expressed in the retina.

The protein localises to the cell membrane. The enzyme catalyses a 1,2-diacyl-sn-glycero-3-phospho-(1D-myo-inositol-4,5-bisphosphate) + H2O = 1D-myo-inositol 1,4,5-trisphosphate + a 1,2-diacyl-sn-glycerol + H(+). It catalyses the reaction a 1,2-diacyl-sn-glycero-3-phospho-(1D-myo-inositol) + H2O = 1D-myo-inositol 1-phosphate + a 1,2-diacyl-sn-glycerol + H(+). Activated phosphatidylinositol-specific phospholipase C enzymes catalyze the production of the second messenger molecules diacylglycerol (DAG) and inositol 1,4,5-trisphosphate (IP3) involved in G-protein coupled receptor signaling pathways. PLCB4 is a direct effector of the endothelin receptor signaling pathway that plays an essential role in lower jaw and middle ear structures development. This chain is 1-phosphatidylinositol 4,5-bisphosphate phosphodiesterase beta-4 (PLCB4), found in Bos taurus (Bovine).